We begin with the raw amino-acid sequence, 190 residues long: Elongation factor P-like protein (190 aa).

Belongs to the elongation factor P family.

The protein is Elongation factor P-like protein of Escherichia fergusonii (strain ATCC 35469 / DSM 13698 / CCUG 18766 / IAM 14443 / JCM 21226 / LMG 7866 / NBRC 102419 / NCTC 12128 / CDC 0568-73).